A 485-amino-acid polypeptide reads, in one-letter code: MALLVEKTTSGREYKVKDMSQADFGRLEIELAEVEMPGLMASRAEFGPSQPVKGAKITCSLHMTIQTAFLIETLTALGAEVRWCSCNIFSTQDHAAAAIARDSAAVFAWKGETLQEYWWCTERALDWGPGGGPDLIVDDGGDATLLIHEGVKAEEEFAKNGTVPDPTSTDNVEFQLVLTIIKESLKTDPLRYTKMKERLVGVSEETTTGVKKLYQMPANGSLLFLPINVNDSVTKSKFDNLYGCRHSLPDGLMRATDVMIAGKVALVAGYGDVGKGCAAAMKQAGARVIVTEIDPICALQATMEGLQVLFLEDVVSEVDIFVTTTGNKDIIMVDHMRKMKNNAIVCNIGHFDNEIDMHGLETFPGVKRITIKPQTDRWVFPDTNSGIIVLAEGRLMNLGCATGHPSFVMSCSFTNQVIAQLELWNERSSGKYEKKVYVLPKHLDEKVAALHLGKFGAKLTKLTKDQADYIYVPVEGPYKPAHYRY.

Substrate contacts are provided by threonine 64, aspartate 139, and glutamate 205. 206–208 (TTT) provides a ligand contact to NAD(+). Lysine 235 and aspartate 239 together coordinate substrate. Residues asparagine 240, 269 to 274 (GYGDVG), glutamate 292, asparagine 327, 348 to 350 (IGH), and asparagine 397 each bind NAD(+).

Belongs to the adenosylhomocysteinase family. The cofactor is NAD(+).

It carries out the reaction S-adenosyl-L-homocysteine + H2O = L-homocysteine + adenosine. It participates in amino-acid biosynthesis; L-homocysteine biosynthesis; L-homocysteine from S-adenosyl-L-homocysteine: step 1/1. Functionally, adenosylhomocysteine is a competitive inhibitor of S-adenosyl-L-methionine-dependent methyl transferase reactions; therefore adenosylhomocysteinase may play a key role in the control of methylations via regulation of the intracellular concentration of adenosylhomocysteine. In Solanum lycopersicum (Tomato), this protein is Adenosylhomocysteinase (SAHH).